The following is a 105-amino-acid chain: Replication restart protein PriB (105 aa).

The region spanning 1 to 102 is the SSB domain; the sequence is MTANRLTLSG…LHAEQIELID (102 aa).

This sequence belongs to the PriB family. As to quaternary structure, homodimer. Interacts with PriA and DnaT. Component of the replication restart primosome. Primosome assembly occurs via a 'hand-off' mechanism. PriA binds to replication forks, subsequently PriB then DnaT bind; DnaT then displaces ssDNA to generate the helicase loading substrate.

Functionally, involved in the restart of stalled replication forks, which reloads the replicative helicase on sites other than the origin of replication; the PriA-PriB pathway is the major replication restart pathway. During primosome assembly it facilitates complex formation between PriA and DnaT on DNA; stabilizes PriA on DNA. Stimulates the DNA unwinding activity of PriA helicase. This is Replication restart protein PriB from Erwinia tasmaniensis (strain DSM 17950 / CFBP 7177 / CIP 109463 / NCPPB 4357 / Et1/99).